The following is a 549-amino-acid chain: Cytoplasmic trehalase (549 aa).

Substrate contacts are provided by residues arginine 168, 175 to 176, asparagine 212, 221 to 223, 292 to 294, and glycine 324; these read WD, RSQ, and RDE. Residues aspartate 326 and glutamate 509 each act as proton donor/acceptor in the active site. Substrate is bound at residue glutamate 525.

The protein belongs to the glycosyl hydrolase 37 family. Monomer.

The protein resides in the cytoplasm. The catalysed reaction is alpha,alpha-trehalose + H2O = alpha-D-glucose + beta-D-glucose. The protein operates within glycan degradation; trehalose degradation; D-glucose from alpha,alpha-trehalose: step 1/1. Functionally, hydrolyzes trehalose to glucose. Could be involved, in cells returning to low osmolarity conditions, in the utilization of the accumulated cytoplasmic trehalose, which was synthesized in response to high osmolarity. The sequence is that of Cytoplasmic trehalase from Escherichia coli O127:H6 (strain E2348/69 / EPEC).